We begin with the raw amino-acid sequence, 924 residues long: Exocyst complex component 2 (924 aa).

The 86-residue stretch at 8–93 (PLVTGISPNE…GTSTVSFKLL (86 aa)) folds into the IPT/TIG domain. Residues 240–260 (QKLENVLNRASNTADTLFQEV) adopt a coiled-coil conformation. A phosphoserine mark is found at Ser431, Ser432, and Ser435. Thr440 is modified (phosphothreonine). Residue Lys454 is modified to N6-acetyllysine. A Phosphoserine modification is found at Ser888.

It belongs to the SEC5 family. As to quaternary structure, the exocyst complex is composed of EXOC1, EXOC2, EXOC3, EXOC4, EXOC5, EXOC6, EXOC7 and EXOC8. Interacts with EXOC3L1. Interacts with GNEFR/DELGEF; this interaction occurs only in the presence of magnesium or manganese and is stimulated by dCTP or GTP. Interacts with RALA and RALB. Interacts with ARL13B; regulates ARL13B localization to the cilium membrane. As to expression, widely expressed with highest levels in brain and placenta.

The protein resides in the midbody. It is found in the midbody ring. Component of the exocyst complex involved in the docking of exocytic vesicles with fusion sites on the plasma membrane. In Homo sapiens (Human), this protein is Exocyst complex component 2 (EXOC2).